Consider the following 401-residue polypeptide: Acetate kinase (401 aa).

N7 is a binding site for Mg(2+). K14 is a binding site for ATP. Substrate is bound at residue R92. The Proton donor/acceptor role is filled by D149. Residues 209–213, 283–285, and 331–335 contribute to the ATP site; these read HLGNG, DAR, and GLGEN. A Mg(2+)-binding site is contributed by E385.

It belongs to the acetokinase family. Homodimer. Mg(2+) serves as cofactor. It depends on Mn(2+) as a cofactor.

Its subcellular location is the cytoplasm. It catalyses the reaction acetate + ATP = acetyl phosphate + ADP. It participates in metabolic intermediate biosynthesis; acetyl-CoA biosynthesis; acetyl-CoA from acetate: step 1/2. Functionally, catalyzes the formation of acetyl phosphate from acetate and ATP. Can also catalyze the reverse reaction. This Helicobacter pylori (strain Shi470) protein is Acetate kinase.